A 540-amino-acid polypeptide reads, in one-letter code: GMP synthase [glutamine-hydrolyzing] (540 aa).

Positions 26–216 constitute a Glutamine amidotransferase type-1 domain; the sequence is IIIILDFGSQ…VYHICECEPT (191 aa). Cysteine 103 acts as the Nucleophile in catalysis. Residues histidine 190 and glutamate 192 contribute to the active site. Residues 217-415 form the GMPS ATP-PPase domain; it reads WTTAAFVEEA…VGLPEEIVQR (199 aa). 244–250 provides a ligand contact to ATP; that stretch reads SGGVDSS.

In terms of assembly, homodimer.

The enzyme catalyses XMP + L-glutamine + ATP + H2O = GMP + L-glutamate + AMP + diphosphate + 2 H(+). It functions in the pathway purine metabolism; GMP biosynthesis; GMP from XMP (L-Gln route): step 1/1. Its function is as follows. Catalyzes the synthesis of GMP from XMP. The chain is GMP synthase [glutamine-hydrolyzing] from Nostoc sp. (strain PCC 7120 / SAG 25.82 / UTEX 2576).